Here is a 505-residue protein sequence, read N- to C-terminus: Kelch-like protein 42 (505 aa).

The BTB domain maps to 5–78 (EMVQIRLEDR…INAGGAREGW (74 aa)). Position 43 is a phosphoserine (serine 43). 6 Kelch repeats span residues 176 to 234 (PGDV…PLAN), 235 to 282 (NLPP…NEWL), 284 to 325 (VASM…DAWN), 327 to 372 (VAPL…DMWT), 374 to 429 (FETC…RQWL), and 431 to 480 (LKEN…DSWE).

Component of the BCR(KLHL42) E3 ubiquitin ligase complex, at least composed of CUL3 and KLHL42. Interacts (via the BTB domain) with CUL3. Interacts (via the kelch domains) with KATNA1.

Its subcellular location is the cytoplasm. It is found in the cytoskeleton. The protein resides in the spindle. The protein operates within protein modification; protein ubiquitination. Its function is as follows. Substrate-specific adapter of a BCR (BTB-CUL3-RBX1) E3 ubiquitin-protein ligase complex required for mitotic progression and cytokinesis. The BCR(KLHL42) E3 ubiquitin ligase complex mediates the ubiquitination and subsequent degradation of KATNA1. Involved in microtubule dynamics throughout mitosis. In Homo sapiens (Human), this protein is Kelch-like protein 42 (KLHL42).